A 559-amino-acid polypeptide reads, in one-letter code: MAASTAAPCYDAPEGVDVRGRYDREFAGILTRDALDFVAGLQREFRGAVRYAMEQRREAQRRYDAGELPRFDPATTLVREGDWTCASVPPAVADRTVEITGPAEPRKMVINALNSGAKVFMADFEDAMSPTWENLMHGQVNLRDAVAGTISFRDAPRGRTYELNDRTAKLFVRPRGWHLPEAHILIDGEPAIGCLVDFGLYFFHNHAAFGAGQGAGFGPLCDLPKMEHSREARIWNGVFQRAEKAAGIEPGSIRATVLVETLPAVFQMNEILHELREHSAGLNCGRWDYIFSYVKTFRAHPDRLLPDRALVGMAQHFMRSYSHLLIHTCHRRGVHAMGGMAAQIPIKDDAAANEAALELVRKDKLREVRAGHDGTWAAHPGLIPAIREVFEGHLGGRPNQIGDAAGHEGASVKEEDLIQPPRGARTVDGLRLNVRVGVQYLAAWLAGSGSVPLYNLMEDAATAEISRVQNWQWLRHGAALDAGGVEVRATPELLARVVEEEMARVEAEVGPDRFRKGRYAEAGRIFSRQCTAPELDDFLTLDAYNLIVAHHPGASPCKL.

Arg173 (proton acceptor) is an active-site residue. Asp459 functions as the Proton donor in the catalytic mechanism. The Microbody targeting signal motif lies at 557–559 (CKL).

This sequence belongs to the malate synthase family.

It localises to the glyoxysome. The enzyme catalyses glyoxylate + acetyl-CoA + H2O = (S)-malate + CoA + H(+). The protein operates within carbohydrate metabolism; glyoxylate cycle; (S)-malate from isocitrate: step 2/2. The chain is Malate synthase, glyoxysomal (LIP) from Zea mays (Maize).